Reading from the N-terminus, the 263-residue chain is Lens fiber major intrinsic protein (263 aa).

The Cytoplasmic segment spans residues 1–9; it reads MWELRSASF. The helical transmembrane segment at 10-29 threads the bilayer; that stretch reads WRAIFAEFFATLFYVFFGLG. Over 30 to 41 the chain is Extracellular; the sequence is ASLRWAPGPLHV. A helical membrane pass occupies residues 42 to 59; that stretch reads LQVALAFGLALATLVQTV. The Cytoplasmic segment spans residues 60–61; sequence GH. Residues 62 to 77 constitute an intramembrane region (discontinuously helical); the sequence is ISGAHVNPAVTFAFLV. An NPA 1 motif is present at residues 68 to 70; it reads NPA. The Cytoplasmic segment spans residues 78–82; the sequence is GSQMS. Residues 83–106 traverse the membrane as a helical segment; that stretch reads LLRAFCYIAAQLLGAVAGAAVLYS. The Extracellular segment spans residues 107-127; it reads VTPPAVRGNLALNTLHAGVSV. A helical membrane pass occupies residues 128–148; sequence GQATTVEIFLTLQFVLCIFAT. The Cytoplasmic segment spans residues 149-156; that stretch reads YDERRNGR. Residues 157–175 traverse the membrane as a helical segment; the sequence is MGSVALAVGFSLTLGHLFG. The Extracellular portion of the chain corresponds to 176–178; that stretch reads MYY. An intramembrane region (discontinuously helical) is located at residues 179-193; that stretch reads TGAGMNPARSFAPAI. The short motif at 184 to 186 is the NPA 2 element; sequence NPA. At 194–200 the chain is on the extracellular side; it reads LTRNFSN. A helical membrane pass occupies residues 201 to 222; the sequence is HWVYWVGPIIGGGLGSLLYDFL. Topologically, residues 223-263 are cytoplasmic; sequence LFPRLKSVSERLSILKGARPSDSNGQPEGTGEPVELKTQAL. The interaction with CALM stretch occupies residues 227–237; the sequence is LKSVSERLSIL. 3 positions are modified to phosphoserine: Ser-235, Ser-243, and Ser-245. The tract at residues 240-263 is disordered; it reads ARPSDSNGQPEGTGEPVELKTQAL. Asn-246 carries the post-translational modification Deamidated asparagine.

This sequence belongs to the MIP/aquaporin (TC 1.A.8) family. In terms of assembly, homotetramer; each monomer provides an independent water pore. Two homotetramers on opposing membranes can dimerize, forming a cell-cell junction. Interacts with CALM; the calcium-calmodulin/CALM complex interacts with the cytoplasmic domains of two aquaporins, leading to channel closure. Interacts with BFSP1 (via C-terminus); prevents calcium-dependent inhibition of the water channel activity. Subject to partial proteolytic cleavage in the eye lens core. Partial proteolysis promotes interactions between tetramers from adjoining membranes. Post-translationally, fatty acylated at Met-1 and Lys-238. The acyl modifications, in decreasing order of ion abundance, are: oleoyl (C18:1) &gt; palmitoyl (C16:0) &gt; stearoyl (C18:0) &gt; eicosenoyl (C20:1) &gt; dihomo-gamma-linolenoyl (C20:3) &gt; palmitoleoyl (C16:1) &gt; eicosadienoyl (C20:2).

Its subcellular location is the cell membrane. The protein localises to the cell junction. The enzyme catalyses H2O(in) = H2O(out). The water channel activity is inhibited by calcium through calmodulin/CALM. Its function is as follows. Aquaporins form homotetrameric transmembrane channels, with each monomer independently mediating water transport across the plasma membrane along its osmotic gradient. Specifically expressed in lens fiber cells, this aquaporin is crucial for maintaining lens water homeostasis and transparency. Beyond water permeability, it also acts as a cell-to-cell adhesion molecule, forming thin junctions between lens fiber cells that are essential for maintaining the ordered structure and transparency of the lens. This chain is Lens fiber major intrinsic protein, found in Mus musculus (Mouse).